We begin with the raw amino-acid sequence, 89 residues long: Small ribosomal subunit protein uS15 (89 aa).

This sequence belongs to the universal ribosomal protein uS15 family. As to quaternary structure, part of the 30S ribosomal subunit. Forms a bridge to the 50S subunit in the 70S ribosome, contacting the 23S rRNA.

In terms of biological role, one of the primary rRNA binding proteins, it binds directly to 16S rRNA where it helps nucleate assembly of the platform of the 30S subunit by binding and bridging several RNA helices of the 16S rRNA. Forms an intersubunit bridge (bridge B4) with the 23S rRNA of the 50S subunit in the ribosome. This Pseudarthrobacter chlorophenolicus (strain ATCC 700700 / DSM 12829 / CIP 107037 / JCM 12360 / KCTC 9906 / NCIMB 13794 / A6) (Arthrobacter chlorophenolicus) protein is Small ribosomal subunit protein uS15.